The chain runs to 355 residues: 3-isopropylmalate dehydrogenase (355 aa).

Residues Arg98, Arg108, Arg132, and Asp223 each contribute to the substrate site. Residues Asp223, Asp247, and Asp251 each contribute to the Mg(2+) site. Residue 283–295 (GSAPDIAGQQKAD) participates in NAD(+) binding.

The protein belongs to the isocitrate and isopropylmalate dehydrogenases family. LeuB type 2 subfamily. In terms of assembly, homodimer. Requires Mg(2+) as cofactor. The cofactor is Mn(2+).

Its subcellular location is the cytoplasm. It catalyses the reaction (2R,3S)-3-isopropylmalate + NAD(+) = 4-methyl-2-oxopentanoate + CO2 + NADH. The protein operates within amino-acid biosynthesis; L-leucine biosynthesis; L-leucine from 3-methyl-2-oxobutanoate: step 3/4. In terms of biological role, catalyzes the oxidation of 3-carboxy-2-hydroxy-4-methylpentanoate (3-isopropylmalate) to 3-carboxy-4-methyl-2-oxopentanoate. The product decarboxylates to 4-methyl-2 oxopentanoate. The sequence is that of 3-isopropylmalate dehydrogenase from Clavibacter michiganensis subsp. michiganensis (strain NCPPB 382).